A 159-amino-acid chain; its full sequence is Large ribosomal subunit protein uL10 (159 aa).

It belongs to the universal ribosomal protein uL10 family. In terms of assembly, part of the ribosomal stalk of the 50S ribosomal subunit. The N-terminus interacts with L11 and the large rRNA to form the base of the stalk. The C-terminus forms an elongated spine to which L12 dimers bind in a sequential fashion forming a multimeric L10(L12)X complex.

Its function is as follows. Forms part of the ribosomal stalk, playing a central role in the interaction of the ribosome with GTP-bound translation factors. The polypeptide is Large ribosomal subunit protein uL10 (Campylobacter jejuni (strain RM1221)).